The primary structure comprises 261 residues: Cytosolic Fe-S cluster assembly factor Nubp2 homolog (261 aa).

14–21 (GKGGVGKS) contributes to the ATP binding site. [4Fe-4S] cluster-binding residues include cysteine 188 and cysteine 191.

Belongs to the Mrp/NBP35 ATP-binding proteins family. NUBP2/CFD1 subfamily. Heterotetramer of 2 Nubp1 and 2 Nubp2 chains. The cofactor is [4Fe-4S] cluster.

The protein localises to the cytoplasm. Its function is as follows. Component of the cytosolic iron-sulfur (Fe/S) protein assembly (CIA) machinery. Required for maturation of extramitochondrial Fe-S proteins. The Nubp1-Nubp2 heterotetramer forms a Fe-S scaffold complex, mediating the de novo assembly of an Fe-S cluster and its transfer to target apoproteins. The sequence is that of Cytosolic Fe-S cluster assembly factor Nubp2 homolog from Drosophila ananassae (Fruit fly).